The sequence spans 1383 residues: Negative regulator of sporulation MDS3 (1383 aa).

Kelch repeat units lie at residues 124 to 179 (CLYL…SPRF), 199 to 246 (GLFI…KDKE), and 356 to 402 (QNVV…WGGF). Residues 450–460 (GRSNNRTSSFV) are compositionally biased toward polar residues. 7 disordered regions span residues 450-506 (GRSN…VLDA), 625-644 (NQRL…DIPK), 653-825 (LLSS…DLFS), 858-884 (LDSF…SDES), 1063-1114 (NNSR…VDKE), 1251-1289 (QLKE…RLPQ), and 1321-1369 (SMTD…KSSS). Over residues 631 to 644 (KSSNSESSSSDIPK) the composition is skewed to low complexity. Residues 693 to 707 (VNREEGSDCSKDRKT) are compositionally biased toward basic and acidic residues. 3 stretches are compositionally biased toward low complexity: residues 726–758 (NSTS…EQIP), 803–815 (ESPF…SMSG), and 858–874 (LDSF…VSSV). The span at 1084-1094 (EGEKQEEIVSK) shows a compositional bias: basic and acidic residues. A compositionally biased stretch (low complexity) spans 1251–1280 (QLKESQLQSKSSPIIPTVSTVTPSPLPSIS). Residues 1341–1352 (LQQTMLSRTPTN) are compositionally biased toward polar residues.

As to quaternary structure, interacts with SIT4.

It is found in the cytoplasm. Its function is as follows. Negatively regulates early sporulation-specific genes. TOR signaling pathway component that contributes to morphogenesis as a regulator of this key morphogenetic pathway. Required for growth and hyphal formation at pH 9, for full virulence in a mouse model of systemic infection and for biofilm formation. Involved in chlamydospore formation, distinctive morphological feature of the fungal pathogen C.albicans that can be induced to form in oxygen-limited environments and has been reported in clinical specimens. In Candida albicans (strain SC5314 / ATCC MYA-2876) (Yeast), this protein is Negative regulator of sporulation MDS3 (MDS3).